Reading from the N-terminus, the 504-residue chain is Probable cytosol aminopeptidase (504 aa).

Positions 263 and 268 each coordinate Mn(2+). The active site involves K275. Positions 286, 345, and 347 each coordinate Mn(2+). The active site involves R349.

The protein belongs to the peptidase M17 family. Mn(2+) is required as a cofactor.

Its subcellular location is the cytoplasm. It catalyses the reaction Release of an N-terminal amino acid, Xaa-|-Yaa-, in which Xaa is preferably Leu, but may be other amino acids including Pro although not Arg or Lys, and Yaa may be Pro. Amino acid amides and methyl esters are also readily hydrolyzed, but rates on arylamides are exceedingly low.. It carries out the reaction Release of an N-terminal amino acid, preferentially leucine, but not glutamic or aspartic acids.. Presumably involved in the processing and regular turnover of intracellular proteins. Catalyzes the removal of unsubstituted N-terminal amino acids from various peptides. In Sulfurihydrogenibium sp. (strain YO3AOP1), this protein is Probable cytosol aminopeptidase.